Reading from the N-terminus, the 497-residue chain is Glucose-6-phosphate 1-dehydrogenase (497 aa).

Residues 15-22, Arg49, and Lys153 contribute to the NADP(+) site; that span reads GASGDLSK. Residues Lys153, 183–187, Glu221, and Asp240 each bind D-glucose 6-phosphate; that span reads HYLGK. Residue His245 is the Proton acceptor of the active site. NADP(+) is bound at residue Arg336. D-glucose 6-phosphate is bound at residue Lys339. Residues Lys345, Arg349, and Arg371 each coordinate NADP(+). D-glucose 6-phosphate is bound at residue Gln373. NADP(+) contacts are provided by residues 379-381, 399-401, and Arg466; these read YLK and DLT.

Belongs to the glucose-6-phosphate dehydrogenase family.

The catalysed reaction is D-glucose 6-phosphate + NADP(+) = 6-phospho-D-glucono-1,5-lactone + NADPH + H(+). It functions in the pathway carbohydrate degradation; pentose phosphate pathway; D-ribulose 5-phosphate from D-glucose 6-phosphate (oxidative stage): step 1/3. Its function is as follows. Catalyzes the rate-limiting step of the oxidative pentose-phosphate pathway, which represents a route for the dissimilation of carbohydrates besides glycolysis. The main function of this enzyme is to provide reducing power (NADPH) and pentose phosphates for fatty acid and nucleic acid synthesis. The protein is Glucose-6-phosphate 1-dehydrogenase (ZWF) of Kluyveromyces lactis (strain ATCC 8585 / CBS 2359 / DSM 70799 / NBRC 1267 / NRRL Y-1140 / WM37) (Yeast).